Here is a 484-residue protein sequence, read N- to C-terminus: MAGPWTFTLLCGLLAATLIQATLSPTAVLILGPKVIKEKLTQELKDHNATSILQQLPLLSAMREKPAGGIPVLGSLVNTVLKHIIWLKVITANILQLQVKPSANDQELLVKIPLDMVAGFNTPLVKTIVEFHMTTEAQATIRMDTSASGPTRLVLSDCATSHGSLRIQLLHKLSFLVNALAKQVMNLLVPSLPNLVKNQLCPVIEASFNGMYADLLQLVKVPISLSIDRLEFDLLYPAIKGDTIQLYLGAKLLDSQGKVTKWFNNSAASLTMPTLDNIPFSLIVSQDVVKAAVAAVLSPEEFMVLLDSVLPESAHRLKSSIGLINEKAADKLGSTQIVKILTQDTPEFFIDQGHAKVAQLIVLEVFPSSEALRPLFTLGIEASSEAQFYTKGDQLILNLNNISSDRIQLMNSGIGWFQPDVLKNIITEIIHSILLPNQNGKLRSGVPVSLVKALGFEAAESSLTKDALVLTPASLWKPSSPVSQ.

An N-terminal signal peptide occupies residues 1-21 (MAGPWTFTLLCGLLAATLIQA). Asparagine 48 carries an N-linked (GlcNAc...) asparagine glycan. A disulfide bridge links cysteine 158 with cysteine 201. N-linked (GlcNAc...) asparagine glycosylation is found at asparagine 264 and asparagine 401.

It belongs to the BPI/LBP/Plunc superfamily. Plunc family. Detected in duodenum mucosal crypts of cholera patients, near Paneth cells (at protein level). Detected in trachea, nasal septal epithelium and lung.

The protein resides in the secreted. Its function is as follows. May play a role in innate immunity in mouth, nose and lungs. Binds bacterial lipopolysaccharide (LPS) and modulates the cellular responses to LPS. This Homo sapiens (Human) protein is BPI fold-containing family B member 1 (BPIFB1).